A 235-amino-acid chain; its full sequence is Ubiquinone/menaquinone biosynthesis C-methyltransferase UbiE (235 aa).

S-adenosyl-L-methionine is bound by residues Thr60, Asp81, and Ser126.

It belongs to the class I-like SAM-binding methyltransferase superfamily. MenG/UbiE family.

It catalyses the reaction a 2-demethylmenaquinol + S-adenosyl-L-methionine = a menaquinol + S-adenosyl-L-homocysteine + H(+). The catalysed reaction is a 2-methoxy-6-(all-trans-polyprenyl)benzene-1,4-diol + S-adenosyl-L-methionine = a 5-methoxy-2-methyl-3-(all-trans-polyprenyl)benzene-1,4-diol + S-adenosyl-L-homocysteine + H(+). It participates in quinol/quinone metabolism; menaquinone biosynthesis; menaquinol from 1,4-dihydroxy-2-naphthoate: step 2/2. It functions in the pathway cofactor biosynthesis; ubiquinone biosynthesis. Functionally, methyltransferase required for the conversion of demethylmenaquinol (DMKH2) to menaquinol (MKH2) and the conversion of 2-polyprenyl-6-methoxy-1,4-benzoquinol (DDMQH2) to 2-polyprenyl-3-methyl-6-methoxy-1,4-benzoquinol (DMQH2). The chain is Ubiquinone/menaquinone biosynthesis C-methyltransferase UbiE from Geobacter sp. (strain M21).